The chain runs to 580 residues: MDGVEIIAKSIKNSAIEKVFGIVGVPITPIAYELQAQGVGFFGFRNEQSCSYAASIVGYLTGLPGLCMTVSGPGVVHALAGVLNAQSNGWPMILLSSSIDQSLVGKGGFQECKQFESAELYCKKCYYLTEIDHFPEILKDAIETSLSNRPGPVYIQIPADLIKSKCKESPNIREAAGYGTIAIKSVVPDMKLIKDAVQLLSEAKRPLVIGGKGAAYCRSENELLEFIEATKIPFLPSPMGKGLLRDDHPLVVGAARSYALKNADVVLVLGARLNWMFNFGKAPTFSTDVKFIIVDVDENQASKTKNPNVVPEIAIVGDARLSIAEMRKLFIGETDEQPQPPQDSLIKSMKMEESWWSNLNQDIQVKTKSLATLMSEPQNNDQEYLTYHKVFNALRVGGLFQEDTIFVNEGANTMDIGRLCIPQTLPRSRLDAGTLATMGVGVGYSVAAQICFPDRSVVCIQGDSAFGFSAMEMEVAVRYKLPIVFIVLNNNGVYEGLESMSDPKYTSSTESASLHIPPTSLSVDTKYELIMQSFGGTGYSISTISNLLDICKQIKSKQISLPTLLNIKIKPTGTKPKIVH.

Glutamate 47 is a binding site for thiamine diphosphate. Residues 413–494 form a thiamine pyrophosphate binding region; it reads TMDIGRLCIP…FIVLNNNGVY (82 aa). Mg(2+) is bound by residues aspartate 463 and asparagine 490.

This sequence belongs to the TPP enzyme family. Homotetramer. Mg(2+) is required as a cofactor. Requires thiamine diphosphate as cofactor.

The protein resides in the peroxisome. It catalyses the reaction a 2-hydroxy-3-methyl fatty acyl-CoA = a 2-methyl-branched fatty aldehyde + formyl-CoA. It carries out the reaction an (R)-2-hydroxy-long-chain-fatty acyl-CoA = a long-chain fatty aldehyde + formyl-CoA. The catalysed reaction is 2-hydroxy-3-methylhexadecanoyl-CoA = 2-methylpentadecanal + formyl-CoA. The enzyme catalyses 2-hydroxyoctadecanoyl-CoA = heptadecanal + formyl-CoA. Its function is as follows. Peroxisomal 2-OH acyl-CoA lyase involved in the cleavage (C1 removal) reaction in the fatty acid alpha-oxydation in a thiamine pyrophosphate (TPP)-dependent manner. Involved in the degradation of 3-methyl-branched fatty acids and the shortening of 2-hydroxy long-chain fatty acids. This Dictyostelium discoideum (Social amoeba) protein is 2-hydroxyacyl-CoA lyase 1 (hacl1).